Here is a 264-residue protein sequence, read N- to C-terminus: ATP synthase subunit a (264 aa).

A run of 5 helical transmembrane segments spans residues 39 to 59 (LDTL…FYIV), 97 to 117 (VAPL…MDLV), 139 to 159 (TADP…VIFY), 205 to 225 (LFGN…LPWW), and 239 to 259 (LLVI…YISL).

This sequence belongs to the ATPase A chain family. In terms of assembly, F-type ATPases have 2 components, CF(1) - the catalytic core - and CF(0) - the membrane proton channel. CF(1) has five subunits: alpha(3), beta(3), gamma(1), delta(1), epsilon(1). CF(0) has three main subunits: a(1), b(2) and c(9-12). The alpha and beta chains form an alternating ring which encloses part of the gamma chain. CF(1) is attached to CF(0) by a central stalk formed by the gamma and epsilon chains, while a peripheral stalk is formed by the delta and b chains.

The protein localises to the cell inner membrane. Functionally, key component of the proton channel; it plays a direct role in the translocation of protons across the membrane. This chain is ATP synthase subunit a, found in Coxiella burnetii (strain CbuK_Q154) (Coxiella burnetii (strain Q154)).